The primary structure comprises 622 residues: Fanconi anemia group G protein (622 aa).

Position 7 is a phosphoserine (serine 7). TPR repeat units follow at residues 246–279 (VQVYTALGSCHRKMGNPQRALLYLVAALKEGSAW), 344–377 (SQTKHILASRCLQTGRAGDAAEHYLDLLALLLDS), 453–486 (SATHLLQGQAWVQLGAQKVAISEFSRCLELLFRA), and 514–547 (AAALISRGLEWVASGQDTKALQDFLLSVQMCPGN).

Belongs to the multisubunit FA complex composed of FANCA, FANCB, FANCC, FANCE, FANCF, FANCG, FANCL/PHF9 and FANCM. The complex is not found in FA patients. In complex with FANCF, FANCA and FANCL, but not with FANCC, nor FANCE, interacts with HES1; this interaction may be essential for the stability and nuclear localization of FA core complex proteins. The complex with FANCC and FANCG may also include EIF2AK2 and HSP70. When phosphorylated at Ser-7, forms a complex with BRCA2, FANCD2 and XRCC3. As to expression, highly expressed in testis and thymus. Found in lymphoblasts.

It localises to the nucleus. The protein resides in the cytoplasm. Functionally, DNA repair protein that may operate in a postreplication repair or a cell cycle checkpoint function. May be implicated in interstrand DNA cross-link repair and in the maintenance of normal chromosome stability. Candidate tumor suppressor gene. The sequence is that of Fanconi anemia group G protein (FANCG) from Homo sapiens (Human).